Here is a 305-residue protein sequence, read N- to C-terminus: MACILKRKSVIAVSFIAAFLFLLVVRLVNEVNFPLLLNCFGQPGTKWIPFSYTYRRPLRTHYGYINVKTQEPLQLDCDLCAIVSNSGQMVGQKVGNEIDRSSCIWRMNNAPTKGYEEDVGRMTMIRVVSHTSVPLLLKNPDYFFKEANTTIYVIWGPFRNMRKDGNGIVYNMLKKTVGIYPNAQIYVTTEKRMSYCDGVFKKETGKDRVQSGSYLSTGWFTFLLAMDACYGIHVYGMINDTYCKTEGYRKVPYHYYEQGRDECDEYFLHEHAPYGGHRFITEKKVFAKWAKKHRIIFTHPNWTLS.

Over 1-8 the chain is Cytoplasmic; it reads MACILKRK. The helical; Signal-anchor for type II membrane protein transmembrane segment at 9-28 threads the bilayer; that stretch reads SVIAVSFIAAFLFLLVVRLV. The Lumenal segment spans residues 29–305; that stretch reads NEVNFPLLLN…IFTHPNWTLS (277 aa). Cysteines 80 and 229 form a disulfide. Residues asparagine 148, asparagine 239, and asparagine 301 are each glycosylated (N-linked (GlcNAc...) asparagine).

This sequence belongs to the glycosyltransferase 29 family. In terms of tissue distribution, expressed in brain and kidney. Observed in the epithelium of the proximal tubules, marginal expression was also found in the distal tubules and collecting tubules.

It is found in the golgi apparatus membrane. It carries out the reaction an alpha-Neu5Ac-(2-&gt;3)-beta-D-Gal-(1-&gt;3)-D-GlcNAc derivative + CMP-N-acetyl-beta-neuraminate = an alpha-Neu5Ac-(2-&gt;3)-beta-D-Gal-(1-&gt;3)-[alpha-Neu5Ac-(2-&gt;6)]-D-GlcNAc derivative + CMP + H(+). It catalyses the reaction a ganglioside GM1b (d18:1(4E)) + CMP-N-acetyl-beta-neuraminate = a ganglioside GD1alpha (d18:1(4E)) + CMP + H(+). The catalysed reaction is a globoside MSGG + CMP-N-acetyl-beta-neuraminate = a globoside DSGG + CMP + H(+). The enzyme catalyses 3-O-[alpha-Neu5Ac-(2-&gt;3)-beta-D-Gal-(1-&gt;3)-alpha-D-GalNAc]-L-Ser-[protein] + CMP-N-acetyl-beta-neuraminate = a 3-O-{alpha-Neu5Ac-(2-&gt;3)-beta-D-Gal-(1-&gt;3)-[alpha-Neu5Ac-(2-&gt;6)]-alpha-D-GalNAc}-L-seryl-[protein] + CMP + H(+). It carries out the reaction 3-O-[alpha-Neu5Ac-(2-&gt;3)-beta-D-Gal-(1-&gt;3)-alpha-D-GalNAc]-L-Thr-[protein] + CMP-N-acetyl-beta-neuraminate = a 3-O-{alpha-Neu5Ac-(2-&gt;3)-beta-D-Gal-(1-&gt;3)-[alpha-Neu5Ac-(2-&gt;6)]-alpha-D-GalNAc}-L-threonyl-[protein] + CMP + H(+). It functions in the pathway protein modification; protein glycosylation. It participates in glycolipid biosynthesis. In terms of biological role, transfers the sialyl group (N-acetyl-alpha-neuraminyl or NeuAc) from CMP-NeuAc to the GalNAc residue on the NeuAc-alpha-2,3-Gal-beta-1,3-GalNAc sequence of glycoproteins and glycolipids forming an alpha-2,6-linkage. Produces branched type disialyl structures by transfer of a sialyl group onto a GalNAc residue inside the backbone core chains. ST6GalNAcIII prefers glycolipids to glycoproteins, predominantly catalyzing the biosynthesis of ganglioside GD1alpha from GM1b. GD1alpha is a critical molecule in the communication and interaction between neuronal cells and their supportive cells, particularly in brain tissues, and functions as an adhesion molecule in the process of metastasis. Sialylation of glycoproteins or glycosphingolipids is very important in tumor development, neuronal development, nerve repair, immunological processes and regulation of hormone sensitivity. The protein is Alpha-N-acetylgalactosaminide alpha-2,6-sialyltransferase 3 (ST6GALNAC3) of Homo sapiens (Human).